The sequence spans 167 residues: Swarming motility protein SwrB (167 aa).

Residues 63–105 (IENKASSASQSDEESQKSGLQTSETYQERDPVQEAENLPEHIE) form a disordered region. Residues 88–105 (YQERDPVQEAENLPEHIE) show a composition bias toward basic and acidic residues.

In terms of biological role, required for swarming motility and for maximal sigma-D activity. In Bacillus subtilis (strain 168), this protein is Swarming motility protein SwrB (swrB).